The primary structure comprises 477 residues: Bifunctional protein HldE (477 aa).

The ribokinase stretch occupies residues 1 to 318 (MKVTLPEFER…ENAVRGRAET (318 aa)). Residue lysine 179 is modified to N6-acetyllysine. 195 to 198 (NLSE) provides a ligand contact to ATP. Residue aspartate 264 is part of the active site. Residues 344-477 (MTNGVFDILH…IKKIQQDKKG (134 aa)) form a cytidylyltransferase region.

In the N-terminal section; belongs to the carbohydrate kinase PfkB family. This sequence in the C-terminal section; belongs to the cytidylyltransferase family. As to quaternary structure, homodimer.

It catalyses the reaction D-glycero-beta-D-manno-heptose 7-phosphate + ATP = D-glycero-beta-D-manno-heptose 1,7-bisphosphate + ADP + H(+). The enzyme catalyses D-glycero-beta-D-manno-heptose 1-phosphate + ATP + H(+) = ADP-D-glycero-beta-D-manno-heptose + diphosphate. Its pathway is nucleotide-sugar biosynthesis; ADP-L-glycero-beta-D-manno-heptose biosynthesis; ADP-L-glycero-beta-D-manno-heptose from D-glycero-beta-D-manno-heptose 7-phosphate: step 1/4. The protein operates within nucleotide-sugar biosynthesis; ADP-L-glycero-beta-D-manno-heptose biosynthesis; ADP-L-glycero-beta-D-manno-heptose from D-glycero-beta-D-manno-heptose 7-phosphate: step 3/4. Catalyzes the phosphorylation of D-glycero-D-manno-heptose 7-phosphate at the C-1 position to selectively form D-glycero-beta-D-manno-heptose-1,7-bisphosphate. Its function is as follows. Catalyzes the ADP transfer from ATP to D-glycero-beta-D-manno-heptose 1-phosphate, yielding ADP-D-glycero-beta-D-manno-heptose. The chain is Bifunctional protein HldE from Shigella dysenteriae serotype 1 (strain Sd197).